Here is a 328-residue protein sequence, read N- to C-terminus: Serine protease 27 (328 aa).

Residues 1–22 (MRQPHIAALLLLPLLLRSGTEG) form the signal peptide. A propeptide spans 23 to 37 (ARTLRACGHPKMFNR) (activation peptide). The Peptidase S1 domain occupies 38–280 (MVGGENALEG…HHKWIHQIIP (243 aa)). Cys63 and Cys79 are disulfide-bonded. His78 serves as the catalytic Charge relay system. N-linked (GlcNAc...) asparagine glycosylation is present at Asn82. Asp127 functions as the Charge relay system in the catalytic mechanism. Disulfide bonds link Cys161–Cys238, Cys194–Cys217, and Cys228–Cys256. Ser232 acts as the Charge relay system in catalysis.

Belongs to the peptidase S1 family.

It is found in the secreted. In Mus musculus (Mouse), this protein is Serine protease 27 (Prss27).